A 325-amino-acid chain; its full sequence is Bifunctional ligase/repressor BirA (325 aa).

A DNA-binding region (H-T-H motif) is located at residues 23-42; the sequence is GQKISDALGCSRTAVWKHIE. The region spanning 74–262 is the BPL/LPL catalytic domain; the sequence is RFGLKTEVMG…CFEKRYRDYM (189 aa). Residues glutamine 118, 122–124, and lysine 189 each bind biotin; that span reads RGR.

Belongs to the biotin--protein ligase family.

It catalyses the reaction biotin + L-lysyl-[protein] + ATP = N(6)-biotinyl-L-lysyl-[protein] + AMP + diphosphate + H(+). Functionally, acts both as a biotin--[acetyl-CoA-carboxylase] ligase and a repressor. This Bacillus subtilis (strain 168) protein is Bifunctional ligase/repressor BirA.